Consider the following 108-residue polypeptide: Large ribosomal subunit protein uL24 (108 aa).

Belongs to the universal ribosomal protein uL24 family. Part of the 50S ribosomal subunit.

In terms of biological role, one of two assembly initiator proteins, it binds directly to the 5'-end of the 23S rRNA, where it nucleates assembly of the 50S subunit. One of the proteins that surrounds the polypeptide exit tunnel on the outside of the subunit. The polypeptide is Large ribosomal subunit protein uL24 (Trichlorobacter lovleyi (strain ATCC BAA-1151 / DSM 17278 / SZ) (Geobacter lovleyi)).